Consider the following 460-residue polypeptide: Elongation factor 1-alpha (460 aa).

Gly2 carries the post-translational modification N,N,N-trimethylglycine. Lys3 carries the post-translational modification N6,N6-dimethyllysine; alternate. The residue at position 3 (Lys3) is an N6-methyllysine; alternate. A tr-type G domain is found at 6–241 (KTHINLVVIG…DAIDPPTRPT (236 aa)). The tract at residues 15–22 (GHVDSGKS) is G1. A GTP-binding site is contributed by 15–22 (GHVDSGKS). Lys31 bears the N6-methyllysine mark. Residues 71–75 (GITID) form a G2 region. At Lys80 the chain carries N6,N6,N6-trimethyllysine. The tract at residues 92–95 (DAPG) is G3. GTP contacts are provided by residues 92-96 (DAPGH) and 154-157 (NKMD). Residues 154–157 (NKMD) are G4. Residues 193 to 195 (SGF) are G5. Lys317 carries the post-translational modification N6,N6-dimethyllysine; alternate. Lys317 is subject to N6-methyllysine; alternate. Lys391 is modified (N6-methyllysine).

Belongs to the TRAFAC class translation factor GTPase superfamily. Classic translation factor GTPase family. EF-Tu/EF-1A subfamily.

Its subcellular location is the cytoplasm. In terms of biological role, this protein promotes the GTP-dependent binding of aminoacyl-tRNA to the A-site of ribosomes during protein biosynthesis. In Coccidioides immitis (strain RS) (Valley fever fungus), this protein is Elongation factor 1-alpha (TEF).